Consider the following 191-residue polypeptide: Molybdenum cofactor guanylyltransferase (191 aa).

GTP contacts are provided by residues 13–15 (LAG), K26, D72, and D102. Position 102 (D102) interacts with Mg(2+).

The protein belongs to the MobA family. Monomer. It depends on Mg(2+) as a cofactor.

It localises to the cytoplasm. The enzyme catalyses Mo-molybdopterin + GTP + H(+) = Mo-molybdopterin guanine dinucleotide + diphosphate. Its function is as follows. Transfers a GMP moiety from GTP to Mo-molybdopterin (Mo-MPT) cofactor (Moco or molybdenum cofactor) to form Mo-molybdopterin guanine dinucleotide (Mo-MGD) cofactor. The sequence is that of Molybdenum cofactor guanylyltransferase from Pseudomonas putida (strain ATCC 700007 / DSM 6899 / JCM 31910 / BCRC 17059 / LMG 24140 / F1).